Reading from the N-terminus, the 102-residue chain is Phosphoribosyl-ATP pyrophosphatase (102 aa).

Belongs to the PRA-PH family.

The protein localises to the cytoplasm. The catalysed reaction is 1-(5-phospho-beta-D-ribosyl)-ATP + H2O = 1-(5-phospho-beta-D-ribosyl)-5'-AMP + diphosphate + H(+). It functions in the pathway amino-acid biosynthesis; L-histidine biosynthesis; L-histidine from 5-phospho-alpha-D-ribose 1-diphosphate: step 2/9. This Dinoroseobacter shibae (strain DSM 16493 / NCIMB 14021 / DFL 12) protein is Phosphoribosyl-ATP pyrophosphatase.